The chain runs to 149 residues: Transcriptional repressor NrdR (149 aa).

Residues C3–C34 fold into a zinc finger. Residues P49–E139 form the ATP-cone domain.

Belongs to the NrdR family. Requires Zn(2+) as cofactor.

Its function is as follows. Negatively regulates transcription of bacterial ribonucleotide reductase nrd genes and operons by binding to NrdR-boxes. This Shewanella sediminis (strain HAW-EB3) protein is Transcriptional repressor NrdR.